A 367-amino-acid chain; its full sequence is 3-isopropylmalate dehydrogenase (367 aa).

77 to 90 (GPKYDDLDFSVKPE) serves as a coordination point for NAD(+). 4 residues coordinate substrate: arginine 97, arginine 107, arginine 135, and aspartate 224. Mg(2+) is bound by residues aspartate 224, aspartate 248, and aspartate 252. 287–299 (GSAPDIAGQGKAN) serves as a coordination point for NAD(+).

It belongs to the isocitrate and isopropylmalate dehydrogenases family. LeuB type 1 subfamily. In terms of assembly, homodimer. Requires Mg(2+) as cofactor. Mn(2+) serves as cofactor.

The protein localises to the cytoplasm. The catalysed reaction is (2R,3S)-3-isopropylmalate + NAD(+) = 4-methyl-2-oxopentanoate + CO2 + NADH. It participates in amino-acid biosynthesis; L-leucine biosynthesis; L-leucine from 3-methyl-2-oxobutanoate: step 3/4. Functionally, catalyzes the oxidation of 3-carboxy-2-hydroxy-4-methylpentanoate (3-isopropylmalate) to 3-carboxy-4-methyl-2-oxopentanoate. The product decarboxylates to 4-methyl-2 oxopentanoate. This is 3-isopropylmalate dehydrogenase from Ruegeria pomeroyi (strain ATCC 700808 / DSM 15171 / DSS-3) (Silicibacter pomeroyi).